The chain runs to 248 residues: 5'-nucleotidase SurE (248 aa).

Residues aspartate 8, aspartate 9, serine 39, and asparagine 91 each contribute to the a divalent metal cation site.

It belongs to the SurE nucleotidase family. A divalent metal cation is required as a cofactor.

Its subcellular location is the cytoplasm. It carries out the reaction a ribonucleoside 5'-phosphate + H2O = a ribonucleoside + phosphate. Its function is as follows. Nucleotidase that shows phosphatase activity on nucleoside 5'-monophosphates. The chain is 5'-nucleotidase SurE from Shewanella amazonensis (strain ATCC BAA-1098 / SB2B).